A 422-amino-acid chain; its full sequence is O-mycaminosyltylonolide 6-deoxyallosyltransferase (422 aa).

Belongs to the glycosyltransferase 28 family.

It catalyses the reaction 5-O-beta-D-mycaminosyltylonolide + dTDP-6-deoxy-alpha-D-allose = demethyllactenocin + dTDP + H(+). In terms of biological role, involved in the biosynthesis of the macrolide antibiotic tylosin derived from the polyketide lactone tylactone. Catalyzes the transfer of 6-deoxy-alpha-D-allose from dTDP-6-deoxy-alpha-D-allose to O-mycaminosyltylonolide (OMT) to yield demethyllactenocin. In Streptomyces fradiae (Streptomyces roseoflavus), this protein is O-mycaminosyltylonolide 6-deoxyallosyltransferase.